Consider the following 343-residue polypeptide: Protein RecA (343 aa).

Gly-64–Thr-71 lines the ATP pocket.

Belongs to the RecA family.

It is found in the cytoplasm. Functionally, can catalyze the hydrolysis of ATP in the presence of single-stranded DNA, the ATP-dependent uptake of single-stranded DNA by duplex DNA, and the ATP-dependent hybridization of homologous single-stranded DNAs. It interacts with LexA causing its activation and leading to its autocatalytic cleavage. This Bacillus cereus (strain ATCC 14579 / DSM 31 / CCUG 7414 / JCM 2152 / NBRC 15305 / NCIMB 9373 / NCTC 2599 / NRRL B-3711) protein is Protein RecA.